The sequence spans 1873 residues: Ankyrin repeat domain-containing protein 31 (1873 aa).

Disordered stretches follow at residues 1-27 and 361-380; these read MEEG…SDLE and EPLS…DQET. A compositionally biased stretch (polar residues) spans 361–379; that stretch reads EPLSNKRNSNSVTNSSDQE. ANK repeat units lie at residues 488–517, 521–550, and 554–583; these read FGEN…NVNQ, AGWT…DVNI, and YQIT…DPLF. Residues 707 to 740 form a disordered region; sequence TGLRKGNLHNVKDPNTNVPKGIGRRKTQHKRTQV. Basic residues predominate over residues 728–737; that stretch reads IGRRKTQHKR. ANK repeat units lie at residues 1154–1183, 1187–1216, and 1220–1249; these read RGES…DVNL, AGWT…KVNC, and DGIL…NPNQ. 4 disordered regions span residues 1242–1263, 1449–1482, 1512–1549, and 1606–1634; these read QNGA…EADD, RSEI…SGSM, FSGN…PSQP, and CDQD…ASES. Over residues 1250 to 1263 the composition is skewed to basic and acidic residues; it reads KDQKQKSALDEADD. Composition is skewed to polar residues over residues 1460–1482 and 1515–1525; these read ELTS…SGSM and NDMNSKQNGSD. The segment covering 1535–1544 has biased composition (basic and acidic residues); it reads RHSDGTEKNK. The span at 1621 to 1632 shows a compositional bias: polar residues; it reads KTSSQQSPTGAS. Positions 1683–1778 constitute an RAMA domain; that stretch reads KKALNYSTAP…TYLGKELLRY (96 aa).

As to quaternary structure, interacts with REC114; the interaction is direct. Interacts with IHO1.

The protein resides in the nucleus. Its subcellular location is the chromosome. Functionally, required for DNA double-strand breaks (DSBs) formation during meiotic recombination. Regulates the spatial and temporal patterns of pre-DSB recombinosome assembly and recombination activity by acting as a scaffold that anchors REC114 and other factors to specific genomic locations, thereby regulating DSB formation. Plays a key role in recombination in the pseudoautosomal regions of sex chromosomes. This Homo sapiens (Human) protein is Ankyrin repeat domain-containing protein 31.